Reading from the N-terminus, the 588-residue chain is Adenine deaminase (588 aa).

Belongs to the metallo-dependent hydrolases superfamily. Adenine deaminase family. In terms of assembly, homodimer. Mn(2+) is required as a cofactor.

It carries out the reaction adenine + H2O + H(+) = hypoxanthine + NH4(+). This is Adenine deaminase from Shigella sonnei (strain Ss046).